The following is a 143-amino-acid chain: MFLGEYEHTVDEKGRLAIPAKFRAGLAEGLVLTRGFDQNLLLYPMPVWRELAARINALPITQPSARNLRRLMFAGASDLGLDKQGRIVLPPNLRQYATITNQAVVTGMDSFIEIWSAERWQTVLDSFADEAPALAEHVSAFGI.

SpoVT-AbrB domains follow at residues 5-47 and 76-119; these read EYEH…PMPV and ASDL…SAER.

This sequence belongs to the MraZ family. Forms oligomers.

The protein resides in the cytoplasm. The protein localises to the nucleoid. The chain is Transcriptional regulator MraZ from Herpetosiphon aurantiacus (strain ATCC 23779 / DSM 785 / 114-95).